Consider the following 172-residue polypeptide: MDLQSHIRSIPDFPKPGILFRDINPLLRSPEAMAEVISQFGRICDQVKPDLIVGIESRGFIFGAPLASDRRLGFVPVRKPGKLPGEVVGLDYALEYGTDRLEIQADALEHSPRVLVVDDLLATGGTAAATGQLVEQAGGCLVGFAFVIELEGFGGRRALPAGQPVEALLRYG.

The protein belongs to the purine/pyrimidine phosphoribosyltransferase family. Homodimer.

It localises to the cytoplasm. The catalysed reaction is AMP + diphosphate = 5-phospho-alpha-D-ribose 1-diphosphate + adenine. Its pathway is purine metabolism; AMP biosynthesis via salvage pathway; AMP from adenine: step 1/1. In terms of biological role, catalyzes a salvage reaction resulting in the formation of AMP, that is energically less costly than de novo synthesis. This is Adenine phosphoribosyltransferase from Synechococcus sp. (strain CC9605).